The following is a 707-amino-acid chain: Translation initiation factor IF-2 (707 aa).

Positions 55 to 80 are enriched in basic and acidic residues; it reads LAEKPKEEKQKDQKNHEQEAQDKEEK. A disordered region spans residues 55–88; that stretch reads LAEKPKEEKQKDQKNHEQEAQDKEEKEIEEDSFY. The 170-residue stretch at 209–378 folds into the tr-type G domain; it reads PRPPIVTVMG…LLVAEMEDLK (170 aa). Residues 218–225 form a G1 region; sequence GHVDHGKT. Residue 218 to 225 coordinates GTP; sequence GHVDHGKT. Residues 243-247 form a G2 region; it reads GITQH. The segment at 264-267 is G3; sequence DTPG. GTP is bound by residues 264 to 268 and 318 to 321; these read DTPGH and NKID. The segment at 318–321 is G4; sequence NKID. The G5 stretch occupies residues 354–356; it reads SAK.

It belongs to the TRAFAC class translation factor GTPase superfamily. Classic translation factor GTPase family. IF-2 subfamily.

Its subcellular location is the cytoplasm. Its function is as follows. One of the essential components for the initiation of protein synthesis. Protects formylmethionyl-tRNA from spontaneous hydrolysis and promotes its binding to the 30S ribosomal subunits. Also involved in the hydrolysis of GTP during the formation of the 70S ribosomal complex. The polypeptide is Translation initiation factor IF-2 (Caldanaerobacter subterraneus subsp. tengcongensis (strain DSM 15242 / JCM 11007 / NBRC 100824 / MB4) (Thermoanaerobacter tengcongensis)).